The following is a 178-amino-acid chain: Protein GrpE (178 aa).

This sequence belongs to the GrpE family. Homodimer.

It localises to the cytoplasm. Its function is as follows. Participates actively in the response to hyperosmotic and heat shock by preventing the aggregation of stress-denatured proteins, in association with DnaK and GrpE. It is the nucleotide exchange factor for DnaK and may function as a thermosensor. Unfolded proteins bind initially to DnaJ; upon interaction with the DnaJ-bound protein, DnaK hydrolyzes its bound ATP, resulting in the formation of a stable complex. GrpE releases ADP from DnaK; ATP binding to DnaK triggers the release of the substrate protein, thus completing the reaction cycle. Several rounds of ATP-dependent interactions between DnaJ, DnaK and GrpE are required for fully efficient folding. This Rickettsia typhi (strain ATCC VR-144 / Wilmington) protein is Protein GrpE.